The following is a 218-amino-acid chain: Guanylate kinase (218 aa).

Positions Gly15–Arg194 constitute a Guanylate kinase-like domain. Position 22–29 (Ser22–Thr29) interacts with ATP.

It belongs to the guanylate kinase family.

The protein localises to the cytoplasm. The catalysed reaction is GMP + ATP = GDP + ADP. In terms of biological role, essential for recycling GMP and indirectly, cGMP. The polypeptide is Guanylate kinase (Rhodospirillum rubrum (strain ATCC 11170 / ATH 1.1.1 / DSM 467 / LMG 4362 / NCIMB 8255 / S1)).